Reading from the N-terminus, the 119-residue chain is Amicyanin-alpha (119 aa).

Positions 1–20 (MRALAFAAALAAFSATAALA) are cleaved as a signal peptide. Positions 21 to 119 (AGALEAVQEA…PFMKGKVVVE (99 aa)) constitute a Plastocyanin-like domain. 4 residues coordinate Cu cation: His-67, Cys-106, His-109, and Met-112.

Cu cation is required as a cofactor.

The protein resides in the periplasm. The protein operates within one-carbon metabolism; methylamine degradation. In terms of biological role, primary acceptor of electrons from methylamine dehydrogenase. Passes those electrons on either a soluble cytochrome c or to pseudoazurin. The sequence is that of Amicyanin-alpha (mauC) from Methylorubrum extorquens (strain ATCC 14718 / DSM 1338 / JCM 2805 / NCIMB 9133 / AM1) (Methylobacterium extorquens).